The following is a 180-amino-acid chain: Large ribosomal subunit protein uL16 (180 aa).

This sequence belongs to the universal ribosomal protein uL16 family.

In Hyperthermus butylicus (strain DSM 5456 / JCM 9403 / PLM1-5), this protein is Large ribosomal subunit protein uL16.